The following is a 96-amino-acid chain: Small ribosomal subunit protein bS6 (96 aa).

This sequence belongs to the bacterial ribosomal protein bS6 family.

Binds together with bS18 to 16S ribosomal RNA. The polypeptide is Small ribosomal subunit protein bS6 (Bacillus mycoides (strain KBAB4) (Bacillus weihenstephanensis)).